Consider the following 179-residue polypeptide: Adenine phosphoribosyltransferase (179 aa).

It belongs to the purine/pyrimidine phosphoribosyltransferase family. As to quaternary structure, homodimer.

The protein resides in the cytoplasm. The enzyme catalyses AMP + diphosphate = 5-phospho-alpha-D-ribose 1-diphosphate + adenine. The protein operates within purine metabolism; AMP biosynthesis via salvage pathway; AMP from adenine: step 1/1. Its function is as follows. Catalyzes a salvage reaction resulting in the formation of AMP, that is energically less costly than de novo synthesis. The protein is Adenine phosphoribosyltransferase of Beijerinckia indica subsp. indica (strain ATCC 9039 / DSM 1715 / NCIMB 8712).